We begin with the raw amino-acid sequence, 1167 residues long: Kinesin-like protein KIN-14M (1167 aa).

Residues 93–130 (PRKENDPGTQNSEGRRKIPKNPAMSEPSSPLSQTTLSS) are disordered. Residues 117 to 130 (SEPSSPLSQTTLSS) show a composition bias toward low complexity. Coiled-coil stretches lie at residues 271 to 333 (VHQM…KEEM), 366 to 398 (AKYR…AMKS), and 432 to 489 (KQEL…ESRS). A Kinesin motor domain is found at 572–900 (NIRVHCRIRP…LKFADRVSGV (329 aa)). Residue 656-663 (GQTGSGKT) participates in ATP binding. The stretch at 907–944 (ANKEGKDIKEFKEQLSLLKDKIAKKDEEISRLQLQSHN) forms a coiled coil. Disordered regions lie at residues 955 to 974 (SLLK…SKIQ) and 1083 to 1167 (PDQD…KRWT). Low complexity predominate over residues 958-972 (KHSSSSPGISSLGSK). 2 stretches are compositionally biased toward polar residues: residues 1113-1124 (ASRTTTPKTPQS) and 1151-1167 (TQAT…KRWT).

This sequence belongs to the TRAFAC class myosin-kinesin ATPase superfamily. Kinesin family. KIN-14 subfamily.

The protein is Kinesin-like protein KIN-14M of Oryza sativa subsp. japonica (Rice).